We begin with the raw amino-acid sequence, 188 residues long: Elongation factor P (188 aa).

Lysine 34 is subject to N6-(3,6-diaminohexanoyl)-5-hydroxylysine.

Belongs to the elongation factor P family. In terms of processing, is beta-lysylated on the epsilon-amino group of Lys-34 by the combined action of EpmA and EpmB, and then hydroxylated on the C5 position of the same residue by EpmC. Lysylation is critical for the stimulatory effect of EF-P on peptide-bond formation. The lysylation moiety would extend toward the peptidyltransferase center and stabilize the terminal 3-CCA end of the tRNA. The hydroxylation of the C5 position on Lys-34 would allow additional potential stabilizing hydrogen-bond interactions with the P-tRNA.

Its subcellular location is the cytoplasm. Its pathway is protein biosynthesis; polypeptide chain elongation. In terms of biological role, involved in peptide bond synthesis. Alleviates ribosome stalling that occurs when 3 or more consecutive Pro residues or the sequence PPG is present in a protein, possibly by augmenting the peptidyl transferase activity of the ribosome. Modification of Lys-34 is required for alleviation. The polypeptide is Elongation factor P (Shigella boydii serotype 18 (strain CDC 3083-94 / BS512)).